Reading from the N-terminus, the 443-residue chain is Glutamate-1-semialdehyde 2,1-aminomutase (443 aa).

Over residues 1–16 (MSVNADSQHSNNSSHQ) the composition is skewed to low complexity. The disordered stretch occupies residues 1–22 (MSVNADSQHSNNSSHQASEKAF). An N6-(pyridoxal phosphate)lysine modification is found at lysine 277.

The protein belongs to the class-III pyridoxal-phosphate-dependent aminotransferase family. HemL subfamily. In terms of assembly, homodimer. The cofactor is pyridoxal 5'-phosphate.

The protein resides in the cytoplasm. It catalyses the reaction (S)-4-amino-5-oxopentanoate = 5-aminolevulinate. The protein operates within porphyrin-containing compound metabolism; protoporphyrin-IX biosynthesis; 5-aminolevulinate from L-glutamyl-tRNA(Glu): step 2/2. The protein is Glutamate-1-semialdehyde 2,1-aminomutase of Corynebacterium jeikeium (strain K411).